Consider the following 240-residue polypeptide: Axial regulator YABBY 3 (240 aa).

The segment at 30–57 adopts a C4-type zinc-finger fold; that stretch reads CSFCDTVLAVSVPPSSLFKTVTVRCGHC. The interval 135–156 is disordered; sequence DHLQEMPRPPPANRPPEKRQRV.

Belongs to the YABBY family. Interacts with SPL/NZZ. Interacts with SPEAR2. Binds to LUG and LUH; these complexes promote adaxial cell identity in leaves as well as embryonic shoot apical meristem (SAM) initiation and postembryonic SAM maintenance. Expressed in abaxial regions of lateral aerial organ primordia leading to cotyledons, leaves, flower meristems, sepals, petals, stamen and carpels, but not in roots.

The protein resides in the nucleus. Its function is as follows. Involved in the abaxial cell fate determination during embryogenesis and organogenesis. Regulates the initiation of embryonic shoot apical meristem (SAM) development. Contributes to the repression of KNOX genes (STM, KNAT1/BP and KNAT2) to avoid ectopic meristems. Binds DNA without sequence specificity. The sequence is that of Axial regulator YABBY 3 (YAB3) from Arabidopsis thaliana (Mouse-ear cress).